A 332-amino-acid polypeptide reads, in one-letter code: 5-dehydro-2-deoxygluconokinase (332 aa).

It belongs to the carbohydrate kinase PfkB family.

The enzyme catalyses 5-dehydro-2-deoxy-D-gluconate + ATP = 6-phospho-5-dehydro-2-deoxy-D-gluconate + ADP + H(+). Its pathway is polyol metabolism; myo-inositol degradation into acetyl-CoA; acetyl-CoA from myo-inositol: step 5/7. In terms of biological role, catalyzes the phosphorylation of 5-dehydro-2-deoxy-D-gluconate (2-deoxy-5-keto-D-gluconate or DKG) to 6-phospho-5-dehydro-2-deoxy-D-gluconate (DKGP). This chain is 5-dehydro-2-deoxygluconokinase, found in Bacillus thuringiensis subsp. konkukian (strain 97-27).